Here is a 276-residue protein sequence, read N- to C-terminus: Undecaprenyl-diphosphatase (276 aa).

A run of 8 helical transmembrane segments spans residues L2–I22, F43–Y63, W83–L103, L111–I131, T147–G167, Y186–L206, L224–L244, and A255–A275.

Belongs to the UppP family.

It is found in the cell membrane. It carries out the reaction di-trans,octa-cis-undecaprenyl diphosphate + H2O = di-trans,octa-cis-undecaprenyl phosphate + phosphate + H(+). In terms of biological role, catalyzes the dephosphorylation of undecaprenyl diphosphate (UPP). Confers resistance to bacitracin. The chain is Undecaprenyl-diphosphatase from Limosilactobacillus fermentum (strain NBRC 3956 / LMG 18251) (Lactobacillus fermentum).